The following is a 150-amino-acid chain: Retinal rod rhodopsin-sensitive cGMP 3',5'-cyclic phosphodiesterase subunit delta (150 aa).

Residues 144–150 form a required for association with membranes region; it reads RVRLFYV.

This sequence belongs to the PDE6D/unc-119 family. Interacts with the prenylated catalytic subunits of PDE6, an oligomer composed of two catalytic chains (PDE6A and PDE6B) and two inhibitory chains (gamma); has no effect on enzyme activity but promotes the release of the prenylated enzyme from cell membrane. Interacts with prenylated GRK1 and GRK7. Interacts with prenylated Ras family members, including RAP2A and RAP2C. Interacts with prenylated RHEB and NRAS. Interacts with prenylated HRAS and KRAS. Interacts with RAB13 (prenylated form); dissociates RAB13 from membranes. Interacts with prenylated INPP5E. Interacts with RAB28 (prenylated form); the interaction promotes RAB28 delivery to the photoreceptor outer segments. Interacts with RPGR. Interacts with ARL2. Interacts with ARL3; the interaction occurs specifically with the GTP-bound form of ARL3. Interaction with ARL2 and ARL3 promotes release of farnesylated cargo proteins. In terms of tissue distribution, widely expressed. Detected in various tissues including spleen, prostate gland, testis, ovary, small intestine, colon, retina, and peripheral blood.

The protein localises to the cytoplasm. Its subcellular location is the cytosol. The protein resides in the cytoplasmic vesicle membrane. It localises to the cytoskeleton. It is found in the cilium basal body. Its function is as follows. Promotes the release of prenylated target proteins from cellular membranes. Modulates the activity of prenylated or palmitoylated Ras family members by regulating their subcellular location. Required for normal ciliary targeting of farnesylated target proteins, such as INPP5E. Required for RAB28 localization to the cone cell outer segments in the retina. Modulates the subcellular location of target proteins by acting as a GTP specific dissociation inhibitor (GDI). Increases the affinity of ARL3 for GTP by several orders of magnitude. Stabilizes ARL3-GTP by decreasing the nucleotide dissociation rate. The protein is Retinal rod rhodopsin-sensitive cGMP 3',5'-cyclic phosphodiesterase subunit delta (PDE6D) of Homo sapiens (Human).